The primary structure comprises 533 residues: Pre-mRNA-splicing factor cwf24 (533 aa).

A compositionally biased stretch (polar residues) spans 1-17 (MEQKNLNINQASGSKIN). The interval 1-69 (MEQKNLNINQ…MRDNIPIVSG (69 aa)) is disordered. Basic residues predominate over residues 27-43 (SRRRHRPRQGLKRKKGF). Residues 184-212 (DYQPDVCKDYKLTGYCGYGDTCKFLHMRE) form a C3H1-type zinc finger. The segment at 254-292 (CLICKKDYRSPIATTCGHHFCEQCAITRYRKTPTCIQCG) adopts an RING-type zinc-finger fold. An N-acetyltransferase domain is found at 379–524 (YFIREITESN…SAFYMVCPLS (146 aa)).

Belongs to the CWC24 family. In terms of assembly, belongs to the 40S cdc5-associated complex (or cwf complex), a spliceosome sub-complex reminiscent of a late-stage spliceosome composed of the U2, U5 and U6 snRNAs and at least brr2, cdc5, cwf2/prp3, cwf3/syf1, cwf4/syf3, cwf5/ecm2, spp42/cwf6, cwf7/spf27, cwf8, cwf9, cwf10, cwf11, cwf12, prp45/cwf13, cwf14, cwf15, cwf16, cwf17, cwf18, cwf19, cwf20, cwf21, cwf22, cwf23, cwf24, cwf25, cwf26, cyp7/cwf27, cwf28, cwf29/ist3, lea1, msl1, prp5/cwf1, prp10, prp12/sap130, prp17, prp22, sap61, sap62, sap114, sap145, slu7, smb1, smd1, smd3, smf1, smg1 and syf2.

Its subcellular location is the nucleus. Involved in mRNA splicing. The sequence is that of Pre-mRNA-splicing factor cwf24 (cwf24) from Schizosaccharomyces pombe (strain 972 / ATCC 24843) (Fission yeast).